The following is a 278-amino-acid chain: Thiazole synthase (278 aa).

The active-site Schiff-base intermediate with DXP is the K109. 1-deoxy-D-xylulose 5-phosphate contacts are provided by residues G170, 197–198 (AG), and 219–220 (NT).

It belongs to the ThiG family. In terms of assembly, homotetramer. Forms heterodimers with either ThiH or ThiS.

It localises to the cytoplasm. The catalysed reaction is [ThiS sulfur-carrier protein]-C-terminal-Gly-aminoethanethioate + 2-iminoacetate + 1-deoxy-D-xylulose 5-phosphate = [ThiS sulfur-carrier protein]-C-terminal Gly-Gly + 2-[(2R,5Z)-2-carboxy-4-methylthiazol-5(2H)-ylidene]ethyl phosphate + 2 H2O + H(+). Its pathway is cofactor biosynthesis; thiamine diphosphate biosynthesis. Catalyzes the rearrangement of 1-deoxy-D-xylulose 5-phosphate (DXP) to produce the thiazole phosphate moiety of thiamine. Sulfur is provided by the thiocarboxylate moiety of the carrier protein ThiS. In vitro, sulfur can be provided by H(2)S. The protein is Thiazole synthase of Cupriavidus taiwanensis (strain DSM 17343 / BCRC 17206 / CCUG 44338 / CIP 107171 / LMG 19424 / R1) (Ralstonia taiwanensis (strain LMG 19424)).